A 59-amino-acid chain; its full sequence is UPF0434 protein Rsph17025_2896 (59 aa).

Belongs to the UPF0434 family.

The chain is UPF0434 protein Rsph17025_2896 from Cereibacter sphaeroides (strain ATCC 17025 / ATH 2.4.3) (Rhodobacter sphaeroides).